A 149-amino-acid polypeptide reads, in one-letter code: Large ribosomal subunit protein uL15 (149 aa).

Residues 21 to 54 are disordered; that stretch reads RGSASGLGCTSGKGNKGQNARSGGGVRPGFEGGQ. Gly residues-rich tracts occupy residues 23–35 and 42–52; these read SASG…GKGN and SGGGVRPGFEG.

Belongs to the universal ribosomal protein uL15 family. In terms of assembly, part of the 50S ribosomal subunit.

Functionally, binds to the 23S rRNA. This is Large ribosomal subunit protein uL15 from Lawsonia intracellularis (strain PHE/MN1-00).